We begin with the raw amino-acid sequence, 71 residues long: MLSLVSPLLKKSIVIQLFSITVYKFKAKFWYKLPFETRLCIIKHTRPKALSVTKQVKRDYRKIAILNSMRK.

This Feline coronavirus (strain FIPV WSU-79/1146) (FCoV) protein is Non-structural protein 3x.